The following is a 348-amino-acid chain: Fructose-1,6-bisphosphatase class 1 2 (348 aa).

Glutamate 93, aspartate 117, leucine 119, and aspartate 120 together coordinate Mg(2+). Substrate-binding positions include 120–123 (DGSS), asparagine 213, tyrosine 244, and lysine 274. Glutamate 280 provides a ligand contact to Mg(2+).

The protein belongs to the FBPase class 1 family. In terms of assembly, homotetramer. The cofactor is Mg(2+).

It localises to the cytoplasm. It catalyses the reaction beta-D-fructose 1,6-bisphosphate + H2O = beta-D-fructose 6-phosphate + phosphate. The protein operates within carbohydrate biosynthesis; gluconeogenesis. The protein is Fructose-1,6-bisphosphatase class 1 2 of Christiangramia forsetii (strain DSM 17595 / CGMCC 1.15422 / KT0803) (Gramella forsetii).